The primary structure comprises 78 residues: Sec-independent protein translocase protein TatA (78 aa).

Residues 1-21 form a helical membrane-spanning segment; it reads MFGRIGLPEILLILAIALIIF. The tract at residues 50-78 is disordered; the sequence is EVNEVEEEVKENKSSDVKENEDNKTEKST. Over residues 59–78 the composition is skewed to basic and acidic residues; that stretch reads KENKSSDVKENEDNKTEKST.

The protein belongs to the TatA/E family. As to quaternary structure, forms a complex with TatC.

It localises to the cell membrane. Part of the twin-arginine translocation (Tat) system that transports large folded proteins containing a characteristic twin-arginine motif in their signal peptide across membranes. TatA could form the protein-conducting channel of the Tat system. The protein is Sec-independent protein translocase protein TatA of Natranaerobius thermophilus (strain ATCC BAA-1301 / DSM 18059 / JW/NM-WN-LF).